A 611-amino-acid polypeptide reads, in one-letter code: UvrABC system protein C (611 aa).

The 78-residue stretch at T14–I91 folds into the GIY-YIG domain. Positions D196–L231 constitute a UVR domain.

The protein belongs to the UvrC family. In terms of assembly, interacts with UvrB in an incision complex.

The protein resides in the cytoplasm. Functionally, the UvrABC repair system catalyzes the recognition and processing of DNA lesions. UvrC both incises the 5' and 3' sides of the lesion. The N-terminal half is responsible for the 3' incision and the C-terminal half is responsible for the 5' incision. This Streptococcus gordonii (strain Challis / ATCC 35105 / BCRC 15272 / CH1 / DL1 / V288) protein is UvrABC system protein C.